We begin with the raw amino-acid sequence, 371 residues long: Protein-glutamate methylesterase/protein-glutamine glutaminase 3 (371 aa).

The Response regulatory domain occupies 5–120 (RVVVIDDSAY…SEEILTIRED (116 aa)). Asp56 is subject to 4-aspartylphosphate. The region spanning 174–362 (PAGRLEVVAI…LDRMSREIIQ (189 aa)) is the CheB-type methylesterase domain. Catalysis depends on residues Ser186, His213, and Asp309.

The protein belongs to the CheB family. In terms of processing, phosphorylated by CheA. Phosphorylation of the N-terminal regulatory domain activates the methylesterase activity.

The protein localises to the cytoplasm. The enzyme catalyses [protein]-L-glutamate 5-O-methyl ester + H2O = L-glutamyl-[protein] + methanol + H(+). It carries out the reaction L-glutaminyl-[protein] + H2O = L-glutamyl-[protein] + NH4(+). Functionally, involved in chemotaxis. Part of a chemotaxis signal transduction system that modulates chemotaxis in response to various stimuli. Catalyzes the demethylation of specific methylglutamate residues introduced into the chemoreceptors (methyl-accepting chemotaxis proteins or MCP) by CheR. Also mediates the irreversible deamidation of specific glutamine residues to glutamic acid. In Geobacter sulfurreducens (strain ATCC 51573 / DSM 12127 / PCA), this protein is Protein-glutamate methylesterase/protein-glutamine glutaminase 3.